The sequence spans 400 residues: Exodeoxyribonuclease 7 large subunit (400 aa).

The protein belongs to the XseA family. In terms of assembly, heterooligomer composed of large and small subunits.

Its subcellular location is the cytoplasm. The catalysed reaction is Exonucleolytic cleavage in either 5'- to 3'- or 3'- to 5'-direction to yield nucleoside 5'-phosphates.. Functionally, bidirectionally degrades single-stranded DNA into large acid-insoluble oligonucleotides, which are then degraded further into small acid-soluble oligonucleotides. The chain is Exodeoxyribonuclease 7 large subunit from Clostridium perfringens (strain ATCC 13124 / DSM 756 / JCM 1290 / NCIMB 6125 / NCTC 8237 / Type A).